Consider the following 169-residue polypeptide: Peptide deformylase (169 aa).

2 residues coordinate Fe cation: Cys91 and His133. Residue Glu134 is part of the active site. Residue His137 participates in Fe cation binding.

Belongs to the polypeptide deformylase family. Fe(2+) serves as cofactor.

It catalyses the reaction N-terminal N-formyl-L-methionyl-[peptide] + H2O = N-terminal L-methionyl-[peptide] + formate. In terms of biological role, removes the formyl group from the N-terminal Met of newly synthesized proteins. Requires at least a dipeptide for an efficient rate of reaction. N-terminal L-methionine is a prerequisite for activity but the enzyme has broad specificity at other positions. This chain is Peptide deformylase, found in Escherichia coli (strain K12 / DH10B).